Consider the following 443-residue polypeptide: Thymidine phosphorylase (443 aa).

Belongs to the thymidine/pyrimidine-nucleoside phosphorylase family. Homodimer.

It carries out the reaction thymidine + phosphate = 2-deoxy-alpha-D-ribose 1-phosphate + thymine. It participates in pyrimidine metabolism; dTMP biosynthesis via salvage pathway; dTMP from thymine: step 1/2. Functionally, the enzymes which catalyze the reversible phosphorolysis of pyrimidine nucleosides are involved in the degradation of these compounds and in their utilization as carbon and energy sources, or in the rescue of pyrimidine bases for nucleotide synthesis. The sequence is that of Thymidine phosphorylase from Shewanella baltica (strain OS223).